A 360-amino-acid chain; its full sequence is Nucleoporin SEH1-B (360 aa).

6 WD repeats span residues 10–49, 55–96, 111–152, 160–210, 217–258, and 276–315; these read DHKDLIHDVSFDFHGRRMATCSSDQSVKVWDKSENVNWHC, THSG…SNDK, DSRT…NLSQ, SCKL…RKYA, SVSD…KELS, and NHNSQVWRVSWNITGTVLASSGDDGTVRLWKANYMDNWKC.

The protein belongs to the WD repeat SEC13 family. Component of the Nup107-160 subcomplex of the nuclear pore complex (NPC). The Nup107-160 subcomplex includes NUP160, NUP133, NUP107, NUP98, NUP85, NUP43, NUP37, SEH1 and SEC13. Component of the GATOR2 subcomplex, composed of MIOS, SEC13, SEH1L, WDR24 and WDR59. The GATOR2 complex interacts with CASTOR1 and CASTOR2; the interaction is negatively regulated by arginine. The GATOR2 complex interacts with SESN1, SESN2 and SESN3; the interaction is negatively regulated by amino acids.

The protein localises to the chromosome. Its subcellular location is the centromere. The protein resides in the kinetochore. It localises to the nucleus. It is found in the nuclear pore complex. The protein localises to the lysosome membrane. Its activity is regulated as follows. The GATOR2 complex is negatively regulated by the upstream amino acid sensors CASTOR1 and SESN2, which sequester the GATOR2 complex in absence of amino acids. In the presence of abundant amino acids, GATOR2 is released from CASTOR1 and SESN2 and activated. Functionally, component of the Nup107-160 subcomplex of the nuclear pore complex (NPC). The Nup107-160 subcomplex is required for the assembly of a functional NPC. The Nup107-160 subcomplex is also required for normal kinetochore microtubule attachment, mitotic progression and chromosome segregation. This subunit plays a role in recruitment of the Nup107-160 subcomplex to the kinetochore. In terms of biological role, as a component of the GATOR2 complex, functions as an activator of the amino acid-sensing branch of the mTORC1 signaling pathway. The GATOR2 complex indirectly activates mTORC1 through the inhibition of the GATOR1 subcomplex. GATOR2 probably acts as an E3 ubiquitin-protein ligase toward GATOR1. In the presence of abundant amino acids, the GATOR2 complex mediates ubiquitination of the NPRL2 core component of the GATOR1 complex, leading to GATOR1 inactivation. In the absence of amino acids, GATOR2 is inhibited, activating the GATOR1 complex. In Xenopus laevis (African clawed frog), this protein is Nucleoporin SEH1-B (seh1l-b).